The sequence spans 256 residues: MAVVLRGGITGGFLHHRRDASSVITRRISSVKAAGGGINPTVAVERATWLPGLNPPPYLDGNLAGDYGFDPLGLGEDPESLKWYVQAELVHSRFAMLGVAGILFTDLLRTTGIRNLPVWYEAGAVKFDFASTKTLIVVQFLLMGFAETKRYMDFVSPGSQAKEGSFFFGLEAALEGLEPGYPGGPLLNPLGLAKDVQNAHDWKLKEIKNGRLAMMAMLGFFVQASVTHTGPIDNLVEHLSNPWHKTIIQTLFTSTS.

A chloroplast-targeting transit peptide spans 1 to 32 (MAVVLRGGITGGFLHHRRDASSVITRRISSVK). Alanine 33 carries the N-acetylalanine modification. Tryptophan 49 serves as a coordination point for chlorophyll b. 2 residues coordinate chlorophyll a: phenylalanine 69 and glutamate 88. Arginine 93 contributes to the chlorophyll b binding site. The next 2 membrane-spanning stretches (helical) occupy residues 94–113 (FAML…TTGI) and 129–146 (FAST…MGFA). Chlorophyll b contacts are provided by glutamate 147 and arginine 150. Residues lysine 205, glutamate 206, asparagine 209, arginine 211, glutamine 223, and histidine 238 each contribute to the chlorophyll a site. Residues 212–232 (LAMMAMLGFFVQASVTHTGPI) traverse the membrane as a helical segment.

The protein belongs to the light-harvesting chlorophyll a/b-binding (LHC) protein family. In terms of assembly, the LHC complex consists of chlorophyll a-b binding proteins. Homodimer. Heterodimer with LHCA2 and, possibly, LHCA3. Can substitute to LHCA4 to form a complex with LHCA1. Binds pigments. Element of the NAD(P)H dehydrogenase-photosystem I supercomplex (NDH-PSI). Binds at least 14 chlorophylls (8 Chl-a and 6 Chl-b) and carotenoids such as lutein and neoxanthin. serves as cofactor. Photoregulated by reversible phosphorylation of its threonine residues.

Its subcellular location is the plastid. It is found in the chloroplast thylakoid membrane. Its function is as follows. The light-harvesting complex (LHC) functions as a light receptor, it captures and delivers excitation energy to photosystems with which it is closely associated. Seems involved in the function of the photosystem I in low light conditions, when other LHCA proteins are less abundant. Required, together with LHCA6, for the formation of a full-size NAD(P)H dehydrogenase-photosystem I supercomplex (NDH-PSI) that triggers cyclic and chlororespiratory electron transport in chloroplast thylakoids, especially under stress conditions (e.g. increased light intensity). The polypeptide is Photosystem I chlorophyll a/b-binding protein 5, chloroplastic (Arabidopsis thaliana (Mouse-ear cress)).